Reading from the N-terminus, the 307-residue chain is Capsid assembly scaffolding protein (307 aa).

2 stretches are compositionally biased toward acidic residues: residues 45–54 (IELASDEVET) and 83–101 (EPTD…EGSE). A disordered region spans residues 45 to 105 (IELASDEVET…GTEGSEEFTP (61 aa)).

Belongs to the T7likevirus capsid assembly scaffolding protein family.

Scaffolding protein involved in the icosahedric procapsid assembly. Coassembles with the capsid proteins to form the procapsid, in which the scaffolding protein is found within the external shell of icosahedrally arranged capsid protein subunits. In a subsequent step the scaffolding protein molecules are released from the procapsid. Facilitates assembly by binding to gp10 hexamers but not the pentamers and locking them into a morphogenically correct conformation. The sequence is that of Capsid assembly scaffolding protein from Escherichia coli (Bacteriophage T7).